The following is a 688-amino-acid chain: Beta-galactosidase BglY (688 aa).

Position 118 (R118) interacts with substrate. A Zn(2+)-binding site is contributed by C122. Residue N156 coordinates substrate. Residue E157 is the Proton donor of the active site. 3 residues coordinate Zn(2+): C162, C164, and C167. E313 serves as the catalytic Nucleophile. Substrate contacts are provided by residues W321 and 361–364 (EKFH).

This sequence belongs to the glycosyl hydrolase 42 family.

The enzyme catalyses Hydrolysis of terminal non-reducing beta-D-galactose residues in beta-D-galactosides.. Ca(2+), Mg(2+) and EDTA have little effect on enzyme activity at 1-10 mM. Zn(2+) at 3, 5, 7 or 10 mM inhibits activity by 20%, 30%, 40% and 65%, respectively. Functionally, hydrolyzes o-nitrophenyl-beta-D-galactopyranoside (ONPG) and p-nitrophenyl-beta-D-fucopyranoside (PNPF), but not p-nitrophenyl-beta-D-glucopyranoside (PNPG), p-nitrophenyl-beta-D-xylopyranoside (PNPX) or p-nitrophenyl-beta-D-arabinopyranoside (PNPA). Also hydrolyzes lactose, including lactose in milk. The protein is Beta-galactosidase BglY (bglY) of Alicyclobacillus acidocaldarius subsp. acidocaldarius (strain ATCC 27009 / DSM 446 / BCRC 14685 / JCM 5260 / KCTC 1825 / NBRC 15652 / NCIMB 11725 / NRRL B-14509 / 104-IA) (Bacillus acidocaldarius).